A 387-amino-acid polypeptide reads, in one-letter code: S-adenosylmethionine synthase (387 aa).

Histidine 17 serves as a coordination point for ATP. Position 19 (aspartate 19) interacts with Mg(2+). Residue glutamate 45 coordinates K(+). L-methionine contacts are provided by glutamate 58 and glutamine 101. The segment at 101-111 (QSPDIAQGVDR) is flexible loop. ATP-binding positions include 168-170 (DAK), 234-235 (RF), aspartate 243, 249-250 (RK), alanine 266, and lysine 270. Aspartate 243 is a binding site for L-methionine. Residue lysine 274 participates in L-methionine binding.

This sequence belongs to the AdoMet synthase family. As to quaternary structure, homotetramer; dimer of dimers. It depends on Mg(2+) as a cofactor. Requires K(+) as cofactor.

It is found in the cytoplasm. It carries out the reaction L-methionine + ATP + H2O = S-adenosyl-L-methionine + phosphate + diphosphate. It participates in amino-acid biosynthesis; S-adenosyl-L-methionine biosynthesis; S-adenosyl-L-methionine from L-methionine: step 1/1. Functionally, catalyzes the formation of S-adenosylmethionine (AdoMet) from methionine and ATP. The overall synthetic reaction is composed of two sequential steps, AdoMet formation and the subsequent tripolyphosphate hydrolysis which occurs prior to release of AdoMet from the enzyme. This chain is S-adenosylmethionine synthase, found in Bordetella petrii (strain ATCC BAA-461 / DSM 12804 / CCUG 43448).